The chain runs to 115 residues: NADH-ubiquinone oxidoreductase chain 3 (115 aa).

Transmembrane regions (helical) follow at residues 4–24 (ALTLFTNTALASLLVLIAFWL), 55–75 (FFLVAITFLLFDLEIALLLPL), and 84–104 (LTTMLTMALLLISLLAASLAY).

It belongs to the complex I subunit 3 family. As to quaternary structure, core subunit of respiratory chain NADH dehydrogenase (Complex I) which is composed of 45 different subunits. Interacts with TMEM186. Interacts with TMEM242.

The protein resides in the mitochondrion inner membrane. It catalyses the reaction a ubiquinone + NADH + 5 H(+)(in) = a ubiquinol + NAD(+) + 4 H(+)(out). In terms of biological role, core subunit of the mitochondrial membrane respiratory chain NADH dehydrogenase (Complex I) which catalyzes electron transfer from NADH through the respiratory chain, using ubiquinone as an electron acceptor. Essential for the catalytic activity of complex I. This Phoca vitulina (Harbor seal) protein is NADH-ubiquinone oxidoreductase chain 3.